Here is a 366-residue protein sequence, read N- to C-terminus: MEEAALGEAELNWSRLSVSAEALESELEARAEERRGAREALLRLLLPYNRLTSLPRALGGGFPHLQLLDVSGNSLTALGPELLTLSGLRTLLARNNRLGGPGSLPKGLAQSPLCRSLQVLNLSGNCFQELPASLLELRALQTLSLGGNQLQSIPAEIENLRSLECLYLGGNFIKEIPPELANLPSLNYLVLCDNKIQSVPPQLSQLHSLRSLSLHNNLLTYLPREILNLIHLEELSLRGNPLVVRFVRDLTYDPPTLLELAARTIKIRSISYTPYDLPGNLLRYLGSASNCPNPKCGGVYFDCCVRQIKFVDFCGKYRLPLMHYLCSPECSSPCSSASHSSTSQSESDSEDEASVAAHRMQKVLLG.

Ser19 is modified (phosphoserine). 9 LRR repeats span residues 40 to 61 (ALLRLLLPYNRLTSLPRALGGG), 64 to 86 (HLQLLDVSGNSLTALGPELLTLS), 87 to 108 (GLRTLLARNNRLGGPGSLPKGL), 116 to 138 (SLQVLNLSGNCFQELPASLLELR), 139 to 161 (ALQTLSLGGNQLQSIPAEIENLR), 162 to 184 (SLECLYLGGNFIKEIPPELANLP), 185 to 206 (SLNYLVLCDNKIQSVPPQLSQL), 208 to 229 (SLRSLSLHNNLLTYLPREILNL), and 231 to 251 (HLEELSLRGNPLVVRFVRDLT). Over residues 337–346 (ASHSSTSQSE) the composition is skewed to low complexity. The interval 337-356 (ASHSSTSQSESDSEDEASVA) is disordered.

The protein is Leucine-rich repeat-containing protein 58 (Lrrc58) of Mus musculus (Mouse).